A 493-amino-acid polypeptide reads, in one-letter code: Gamma-aminobutyric acid receptor subunit alpha-3 (493 aa).

The first 28 residues, 1–28, serve as a signal peptide directing secretion; it reads MITTQMWHFYVTRVGLLLLISILPGTTG. Positions 27–54 are disordered; sequence TGQGESRRQEPGDFVKQDIGGLSPKHAP. The Extracellular portion of the chain corresponds to 29–276; the sequence is QGESRRQEPG…THFHLKRKIG (248 aa). The span at 31–42 shows a compositional bias: basic and acidic residues; it reads ESRRQEPGDFVK. An N-linked (GlcNAc...) asparagine glycan is attached at Asn63. Arg119 contacts 4-aminobutanoate. Asn163 and Asn176 each carry an N-linked (GlcNAc...) asparagine glycan. 4-aminobutanoate is bound at residue Thr182. Cys191 and Cys205 are oxidised to a cystine. Asn228 carries N-linked (GlcNAc...) asparagine glycosylation. Helical transmembrane passes span 277–298, 304–325, and 338–359; these read YFVIQTYLPCIMTVILSQVSFW, VPARTVFGVTTVLTMTTLSISA, and MDWFIAVCYAFVFSALIEFATV. Topologically, residues 360–458 are cytoplasmic; it reads NYFTKRSWAW…TYNSVSKVDK (99 aa). Position 427 is a phosphoserine (Ser427). Thr428 carries the phosphothreonine modification. Phosphoserine occurs at positions 434 and 443. Residues 459–480 form a helical membrane-spanning segment; that stretch reads ISRIIFPVLFAIFNLVYWATYV.

It belongs to the ligand-gated ion channel (TC 1.A.9) family. Gamma-aminobutyric acid receptor (TC 1.A.9.5) subfamily. GABRA3 sub-subfamily. As to quaternary structure, heteropentamer, formed by a combination of alpha (GABRA1-6), beta (GABRB1-3), gamma (GABRG1-3), delta (GABRD), epsilon (GABRE), rho (GABRR1-3), pi (GABRP) and theta (GABRQ) chains, each subunit exhibiting distinct physiological and pharmacological properties. Binds UBQLN1. Interacts with GPHN. As to expression, expressed in most brain regions. Expressed in lungs, in alveolar epithelium.

It localises to the postsynaptic cell membrane. The protein resides in the cell membrane. It carries out the reaction chloride(in) = chloride(out). Alpha subunit of the heteropentameric ligand-gated chloride channel gated by gamma-aminobutyric acid (GABA), a major inhibitory neurotransmitter in the brain. GABA-gated chloride channels, also named GABA(A) receptors (GABAAR), consist of five subunits arranged around a central pore and contain GABA active binding site(s) located at the alpha and beta subunit interface(s). When activated by GABA, GABAARs selectively allow the flow of chloride anions across the cell membrane down their electrochemical gradient. Chloride influx into the postsynaptic neuron following GABAAR opening decreases the neuron ability to generate a new action potential, thereby reducing nerve transmission. The chain is Gamma-aminobutyric acid receptor subunit alpha-3 from Rattus norvegicus (Rat).